The chain runs to 431 residues: Glucose-1-phosphate adenylyltransferase (431 aa).

Lys39 contributes to the beta-D-fructose 1,6-bisphosphate binding site. AMP is bound by residues Arg40, His46, and Arg52. Residues Tyr114, Gly179, 194–195 (EK), and Ser212 each bind alpha-D-glucose 1-phosphate. Glu370 and Arg386 together coordinate AMP. Residues 419–423 (REMLR) and 429–431 (QER) contribute to the beta-D-fructose 1,6-bisphosphate site.

Belongs to the bacterial/plant glucose-1-phosphate adenylyltransferase family. Homotetramer.

It carries out the reaction alpha-D-glucose 1-phosphate + ATP + H(+) = ADP-alpha-D-glucose + diphosphate. It participates in glycan biosynthesis; glycogen biosynthesis. Allosterically activated by fructose-1,6-bisphosphate (F16BP) and inhibited by AMP. Functionally, involved in the biosynthesis of ADP-glucose, a building block required for the elongation reactions to produce glycogen. Catalyzes the reaction between ATP and alpha-D-glucose 1-phosphate (G1P) to produce pyrophosphate and ADP-Glc. The chain is Glucose-1-phosphate adenylyltransferase from Salmonella typhi.